Consider the following 318-residue polypeptide: L-malyl-CoA/beta-methylmalyl-CoA lyase (318 aa).

Substrate is bound by residues Phe19, Arg24, Lys30, and Arg76. Residues Glu141 and Asp168 each contribute to the Mg(2+) site. Residues Ala167–Asp168 and Ile251–His252 contribute to the substrate site.

Belongs to the HpcH/HpaI aldolase family. As to quaternary structure, homohexamer. Dimer of trimers. Mg(2+) serves as cofactor. It depends on Mn(2+) as a cofactor.

The catalysed reaction is (S)-malyl-CoA = glyoxylate + acetyl-CoA. It catalyses the reaction (2R,3S)-beta-methylmalyl-CoA = propanoyl-CoA + glyoxylate. In terms of biological role, involved in the ethylmalonyl-CoA pathway for acetate assimilation. Catalyzes the reversible condensation of glyoxylate and acetyl-CoA to L-malyl-CoA and the reversible condensation of glyoxylate and propionyl-CoA to yield beta-methylmalyl-CoA. This is L-malyl-CoA/beta-methylmalyl-CoA lyase from Cereibacter sphaeroides (strain ATCC 17025 / ATH 2.4.3) (Rhodobacter sphaeroides).